A 426-amino-acid chain; its full sequence is Probable imidazolonepropionase (426 aa).

4-imidazolone-5-propanoate is bound by residues Y159 and H192. Residue Y159 participates in N-formimidoyl-L-glutamate binding. Residue H260 coordinates Fe(3+). A Zn(2+)-binding site is contributed by H260. E263 serves as a coordination point for 4-imidazolone-5-propanoate. D334 serves as a coordination point for Fe(3+). D334 is a Zn(2+) binding site. N-formimidoyl-L-glutamate is bound at residue N336.

The protein belongs to the metallo-dependent hydrolases superfamily. HutI family. It depends on Zn(2+) as a cofactor. The cofactor is Fe(3+).

The catalysed reaction is 4-imidazolone-5-propanoate + H2O = N-formimidoyl-L-glutamate. Its pathway is amino-acid degradation; L-histidine degradation into L-glutamate; N-formimidoyl-L-glutamate from L-histidine: step 3/3. The protein is Probable imidazolonepropionase (Amdhd1) of Mus musculus (Mouse).